A 391-amino-acid chain; its full sequence is Phosphoglycerate kinase (391 aa).

Substrate contacts are provided by residues 21–23, Arg-36, 59–62, Arg-113, and Arg-146; these read DLN and HLGR. Residues Lys-197, Glu-319, and 345 to 348 contribute to the ATP site; that span reads GGDT.

The protein belongs to the phosphoglycerate kinase family. Monomer.

It is found in the cytoplasm. The catalysed reaction is (2R)-3-phosphoglycerate + ATP = (2R)-3-phospho-glyceroyl phosphate + ADP. It participates in carbohydrate degradation; glycolysis; pyruvate from D-glyceraldehyde 3-phosphate: step 2/5. In Colwellia psychrerythraea (strain 34H / ATCC BAA-681) (Vibrio psychroerythus), this protein is Phosphoglycerate kinase.